A 137-amino-acid chain; its full sequence is Large ribosomal subunit protein uL16 (137 aa).

Belongs to the universal ribosomal protein uL16 family. Part of the 50S ribosomal subunit.

Its function is as follows. Binds 23S rRNA and is also seen to make contacts with the A and possibly P site tRNAs. This chain is Large ribosomal subunit protein uL16, found in Pseudomonas fluorescens (strain Pf0-1).